Consider the following 150-residue polypeptide: DNA-directed RNA polymerases I, II, and III subunit RPABC3 (150 aa).

Ala-2 carries the post-translational modification N-acetylalanine.

It belongs to the eukaryotic RPB8 RNA polymerase subunit family. As to quaternary structure, component of the RNA polymerase I (Pol I), RNA polymerase II (Pol II) and RNA polymerase III (Pol III) complexes consisting of at least 13, 12 and 17 subunits, respectively. Pol I complex consists of a ten-subunit catalytic core composed of POLR1A/RPA1, POLR1B/RPA2, POLR1C/RPAC1, POLR1D/RPAC2, POLR1H/RPA12, POLR2E/RPABC1, POLR2F/RPABC2, POLR2H/RPABC3, POLR2K/RPABC4 and POLR2L/RPABC5; a mobile stalk subunit POLR1F/RPA43 protruding from the core and additional subunits homologous to general transcription factors POLR1E/RPA49 and POLR1G/RPA34. Part of Pol I pre-initiation complex (PIC), in which Pol I core assembles with RRN3 and promoter-bound UTBF and SL1/TIF-IB complex. Pol II complex contains a ten-subunit catalytic core composed of POLR2A/RPB1, POLR2B/RPB2, POLR2C/RPB3, POLR2I/RPB9, POLR2J/RPB11, POLR2E/RPABC1, POLR2F/RPABC2, POLR2H/RPABC3, POLR2K/RPABC4 and POLR2L/RPABC5 and a mobile stalk composed of two subunits POLR2D/RPB4 and POLR2G/RPB7. Part of Pol II(G) complex, in which Pol II core associates with an additional subunit POLR2M; unlike conventional Pol II, Pol II(G) functions as a transcriptional repressor. Part of Pol II pre-initiation complex (PIC), in which Pol II core assembles with Mediator, general transcription factors and other specific initiation factors including GTF2E1, GTF2E2, GTF2F1, GTF2F2, TCEA1, ERCC2, ERCC3, GTF2H2, GTF2H3, GTF2H4, GTF2H5, GTF2A1, GTF2A2, GTF2B and TBP; this large multi-subunit PIC complex mediates DNA unwinding and targets Pol II core to the transcription start site where the first phosphodiester bond forms. Directly interacts with POLR2A. Pol III complex consists of a ten-subunit catalytic core composed of POLR3A/RPC1, POLR3B/RPC2, POLR1C/RPAC1, POLR1D/RPAC2, POLR3K/RPC10, POLR2E/RPABC1, POLR2F/RPABC2, POLR2H/RPABC3, POLR2K/RPABC4 and POLR2L/RPABC5; a mobile stalk composed of two subunits POLR3H/RPC8 and CRCP/RPC9, protruding from the core and functioning primarily in transcription initiation; and additional subunits homologous to general transcription factors of the RNA polymerase II machinery, POLR3C/RPC3-POLR3F/RPC6-POLR3G/RPC7 heterotrimer required for transcription initiation and POLR3D/RPC4-POLR3E/RPC5 heterodimer involved in both transcription initiation and termination.

It is found in the nucleus. Its subcellular location is the nucleolus. Functionally, DNA-dependent RNA polymerase catalyzes the transcription of DNA into RNA using the four ribonucleoside triphosphates as substrates. Common component of RNA polymerases I, II and III which synthesize ribosomal RNA precursors, mRNA precursors and many functional non-coding RNAs, and small RNAs, such as 5S rRNA and tRNAs, respectively. The chain is DNA-directed RNA polymerases I, II, and III subunit RPABC3 (POLR2H) from Bos taurus (Bovine).